The sequence spans 707 residues: GDNF-inducible zinc finger protein 1 (707 aa).

Positions 31 to 103 (CDVTVIVDYQ…VYTARVRVKE (73 aa)) constitute a BTB domain. Residues 149-165 (VEASSGPQVSVTPSSKA) are compositionally biased toward polar residues. Disordered regions lie at residues 149 to 221 (VEAS…PKIR) and 243 to 309 (RRLR…KDGE). Composition is skewed to basic and acidic residues over residues 198–213 (PSKKCKEKLDKKKDVA), 243–278 (RRLREQQKSAEEAAKNDKCPQDQSPDNERVEAEPAS), and 287–298 (VEREESLQKVEG). 10 C2H2-type zinc fingers span residues 316-338 (FQCTVCDKAFLYEKSFLKHIKYH), 347-370 (YRCDTCGQTFANRCNLKSHQRHVH), 376-399 (FPCEMCAKKFKRKKDVKRHVLQVH), 406-428 (HRCGQCGKGLSSKTALRLHERTH), 434-456 (YGCTKCDAKFSQPSALKTHLRVH), 462-484 (FVCDECGARFTQNHMLIYHKRCH), 490-512 (FMCETCGKSFASKEYLKHHNRIH), 518-540 (FKCEVCLRTFAQRNSLYQHIKVH), 546-568 (YCCDQCGKQFTQVNALQRHHRIH), and 574-596 (YMCNACGRTFTDKSTLRRHTSIH). Ser612 carries the phosphoserine modification.

It belongs to the krueppel C2H2-type zinc-finger protein family. As to quaternary structure, interacts with NCL.

The protein resides in the cytoplasm. Its subcellular location is the nucleus. The protein localises to the nucleoplasm. It localises to the nucleolus. In terms of biological role, transcriptional repressor that binds the GZF1 responsive element (GRE) (consensus: 5'-TGCGCN[TG][CA]TATA-3'). May be regulating VSX2/HOX10 expression. This chain is GDNF-inducible zinc finger protein 1 (Gzf1), found in Rattus norvegicus (Rat).